The chain runs to 67 residues: Large ribosomal subunit protein bL35 (67 aa).

It belongs to the bacterial ribosomal protein bL35 family.

The chain is Large ribosomal subunit protein bL35 from Sinorhizobium fredii (strain NBRC 101917 / NGR234).